Here is a 215-residue protein sequence, read N- to C-terminus: Protein-L-isoaspartate O-methyltransferase (215 aa).

The active site involves Ser-62.

Belongs to the methyltransferase superfamily. L-isoaspartyl/D-aspartyl protein methyltransferase family.

It is found in the cytoplasm. The catalysed reaction is [protein]-L-isoaspartate + S-adenosyl-L-methionine = [protein]-L-isoaspartate alpha-methyl ester + S-adenosyl-L-homocysteine. In terms of biological role, catalyzes the methyl esterification of L-isoaspartyl residues in peptides and proteins that result from spontaneous decomposition of normal L-aspartyl and L-asparaginyl residues. It plays a role in the repair and/or degradation of damaged proteins. The protein is Protein-L-isoaspartate O-methyltransferase of Nitratidesulfovibrio vulgaris (strain DSM 19637 / Miyazaki F) (Desulfovibrio vulgaris).